Reading from the N-terminus, the 158-residue chain is Transcription factor BTF3 homolog 4 (158 aa).

The 66-residue stretch at 33–98 (TADDKKLQSS…AEVKQITEML (66 aa)) folds into the NAC-A/B domain. Residues 123 to 158 (QVLDSKASKPEDIEEEDDDVPELVGNFDEASKNEAN) form a disordered region. Residues 134–143 (DIEEEDDDVP) show a composition bias toward acidic residues.

It belongs to the NAC-beta family.

This Xenopus laevis (African clawed frog) protein is Transcription factor BTF3 homolog 4 (btf3l4).